The primary structure comprises 230 residues: Oxygen-evolving enhancer protein 3-2, chloroplastic (230 aa).

A chloroplast-targeting transit peptide spans 1–49; that stretch reads MAQAVTSMAGLRGASQAVLEGSLQINGSNRLNISRVSVGSQRTGLVIRA. The transit peptide at 50–82 directs the protein to the thylakoid; it reads QQNVSVPESSRRSVIGLVAAGLAGGSFVKAVFA. Serine 125 is modified (phosphoserine). At threonine 195 the chain carries Phosphothreonine. The residue at position 215 (tyrosine 215) is a Phosphotyrosine. Phosphoserine is present on serine 216. Threonine 218 carries the phosphothreonine modification.

It belongs to the PsbQ family.

It is found in the plastid. The protein localises to the chloroplast thylakoid membrane. Its function is as follows. Required for photosystem II assembly/stability and photoautotrophic growth under low light conditions. In Arabidopsis thaliana (Mouse-ear cress), this protein is Oxygen-evolving enhancer protein 3-2, chloroplastic (PSBQ2).